We begin with the raw amino-acid sequence, 837 residues long: Zinc fingers and homeoboxes protein 2 (837 aa).

The tract at residues 27–77 (VDRAKEKGIGTPQPDVAKDSWAAELENSSKENEVIEVKSMGESQSKKLQGG) is interaction with EFNB1. Threonine 37 is subject to Phosphothreonine. Residue lysine 64 forms a Glycyl lysine isopeptide (Lys-Gly) (interchain with G-Cter in SUMO2) linkage. 2 C2H2-type zinc fingers span residues 78–101 (YECK…DMQH) and 110–133 (YVCA…SKFH). The segment covering 164–180 (SITTSGPGTGDSDSGIS) has biased composition (low complexity). Residues 164–204 (SITTSGPGTGDSDSGISVSKTPIMKPGKPKADAKKVPKKPE) form a disordered region. Basic and acidic residues predominate over residues 192–204 (PKADAKKVPKKPE). Positions 195–358 (DAKKVPKKPE…PAQLAPTKVT (164 aa)) are required for homodimerization. Phosphothreonine is present on threonine 207. 4 DNA-binding regions (homeobox) span residues 263-324 (NTTK…WSPE), 439-501 (TPAS…IVHI), 530-591 (PQKF…EQAV), and 628-690 (SPSP…TVKW). Residues 263–446 (NTTKYNSALD…PLTPASDRKK (184 aa)) are required for repressor activity. Positions 263–497 (NTTKYNSALD…SDHRYRCQRG (235 aa)) are required for interaction with NFYA. Residues 317 to 446 (HGISWSPEEV…PLTPASDRKK (130 aa)) form a required for nuclear localization region. The tract at residues 404–445 (GQKRPLVTPQAAPEPKRPHIAQVPEPPPKVANPPLTPASDRK) is disordered. A compositionally biased stretch (pro residues) spans 427–439 (PEPPPKVANPPLT). A Glycyl lysine isopeptide (Lys-Gly) (interchain with G-Cter in SUMO2) cross-link involves residue lysine 455. Residues 755–837 (PAKDCLPAKP…DCVPAEAGQA (83 aa)) form a disordered region. Residues serine 825 and serine 827 each carry the phosphoserine modification.

The protein belongs to the ZHX family. As to quaternary structure, homodimer (via homeobox domain). Heterodimer with ZHX1 (via homeobox domain 1). Heterodimer with ZHX3 (via homeobox domain 1). Heterodimerization with ZHX1 is not necessary for repressor activity. Interacts (via homeobox domain) with NFYA (via N-terminus). Interacts with EFNB1 intracellular domain peptide; the interaction enhances ZHX2 transcriptional repression activity. As to expression, ubiquitously expressed. Expressed in podocytes.

It localises to the nucleus. Functionally, acts as a transcriptional repressor. Represses the promoter activity of the CDC25C gene stimulated by NFYA. May play a role in retinal development where it regulates the composition of bipolar cell populations, by promoting differentiation of bipolar OFF-type cells. In the brain, may promote maintenance and suppress differentiation of neural progenitor cells in the developing cortex. This chain is Zinc fingers and homeoboxes protein 2 (ZHX2), found in Homo sapiens (Human).